The chain runs to 483 residues: Spermatogenesis-defective protein 39 homolog (483 aa).

The protein belongs to the SPE39 family. In terms of assembly, interacts with vps33b. As to expression, high levels detected in liver and small intestine of larvae at 5 days post-fertilization.

The protein localises to the cytoplasm. Its subcellular location is the cytoplasmic vesicle. It localises to the early endosome. The protein resides in the recycling endosome. It is found in the late endosome. In terms of biological role, proposed to be involved in endosomal maturation implicating in part vps33b. In epithelial cells, the vps33b:vipas39 complex may play a role in the apical rab11a-dependent recycling pathway and in the maintenance of the apical-basolateral polarity. May play a role in lysosomal trafficking, probably via association with the core HOPS complex in a discrete population of endosomes; the functions seems to be independent of vps33b. May play a role in vesicular trafficking during spermatogenesis. May be involved in direct or indirect transcriptional regulation of E-cadherin. This Danio rerio (Zebrafish) protein is Spermatogenesis-defective protein 39 homolog (vipas39).